The sequence spans 404 residues: Chorismate synthase (404 aa).

Arginine 47 is a binding site for NADP(+). FMN is bound by residues 156–158 (RSS), 281–282 (NA), glycine 321, 336–340 (KPTST), and arginine 363.

Belongs to the chorismate synthase family. In terms of assembly, homotetramer. It depends on FMNH2 as a cofactor.

It catalyses the reaction 5-O-(1-carboxyvinyl)-3-phosphoshikimate = chorismate + phosphate. It participates in metabolic intermediate biosynthesis; chorismate biosynthesis; chorismate from D-erythrose 4-phosphate and phosphoenolpyruvate: step 7/7. Its function is as follows. Catalyzes the anti-1,4-elimination of the C-3 phosphate and the C-6 proR hydrogen from 5-enolpyruvylshikimate-3-phosphate (EPSP) to yield chorismate, which is the branch point compound that serves as the starting substrate for the three terminal pathways of aromatic amino acid biosynthesis. This reaction introduces a second double bond into the aromatic ring system. This Rhodopirellula baltica (strain DSM 10527 / NCIMB 13988 / SH1) protein is Chorismate synthase.